A 331-amino-acid polypeptide reads, in one-letter code: Large ribosomal subunit protein uL3 (331 aa).

It belongs to the universal ribosomal protein uL3 family. As to quaternary structure, part of the 50S ribosomal subunit. Forms a cluster with proteins L14 and L24e.

One of the primary rRNA binding proteins, it binds directly near the 3'-end of the 23S rRNA, where it nucleates assembly of the 50S subunit. This chain is Large ribosomal subunit protein uL3, found in Archaeoglobus fulgidus (strain ATCC 49558 / DSM 4304 / JCM 9628 / NBRC 100126 / VC-16).